A 1588-amino-acid chain; its full sequence is Pentafunctional AROM polypeptide (1588 aa).

A 3-dehydroquinate synthase region spans residues 1–392 (MVQLAKVPIL…YGDSAQFVSD (392 aa)). Residues 43-45 (DTN), 78-81 (ETSK), 109-111 (GGV), and Asp-114 contribute to the NAD(+) site. Arg-125 serves as a coordination point for 7-phospho-2-dehydro-3-deoxy-D-arabino-heptonate. 134–135 (TS) serves as a coordination point for NAD(+). 7-phospho-2-dehydro-3-deoxy-D-arabino-heptonate-binding residues include Asp-141 and Lys-147. An NAD(+)-binding site is contributed by Lys-156. A 7-phospho-2-dehydro-3-deoxy-D-arabino-heptonate-binding site is contributed by Asn-157. Residues 174–177 (WLET) and Asn-185 contribute to the NAD(+) site. Glu-189 is a binding site for Zn(2+). 7-phospho-2-dehydro-3-deoxy-D-arabino-heptonate is bound by residues 189–192 (EVIK) and Lys-258. Glu-268 serves as the catalytic Proton acceptor; for 3-dehydroquinate synthase activity. 7-phospho-2-dehydro-3-deoxy-D-arabino-heptonate contacts are provided by residues 272–276 (RNLLN) and His-279. His-279 lines the Zn(2+) pocket. His-283 serves as the catalytic Proton acceptor; for 3-dehydroquinate synthase activity. The 7-phospho-2-dehydro-3-deoxy-D-arabino-heptonate site is built by His-295 and Lys-364. Zn(2+) is bound at residue His-295. Residues 405-871 (VYPFKDIPAD…WDVLHSELGA (467 aa)) form an EPSP synthase region. The active-site For EPSP synthase activity is Cys-853. The shikimate kinase stretch occupies residues 890–1080 (SVVIIGMRAA…IPSGRSAFVC (191 aa)). 895–902 (GMRAAGKT) is an ATP binding site. A 3-dehydroquinase region spans residues 1081–1293 (LTFDDLTEQT…AAPGQLTVAQ (213 aa)). The active-site Proton acceptor; for 3-dehydroquinate dehydratase activity is His-1198. The active-site Schiff-base intermediate with substrate; for 3-dehydroquinate dehydratase activity is the Lys-1227. The interval 1306-1588 (PKELFVVGKP…KAIFDAVTKE (283 aa)) is shikimate dehydrogenase.

The protein in the N-terminal section; belongs to the sugar phosphate cyclases superfamily. Dehydroquinate synthase family. In the 2nd section; belongs to the EPSP synthase family. This sequence in the 3rd section; belongs to the shikimate kinase family. It in the 4th section; belongs to the type-I 3-dehydroquinase family. The protein in the C-terminal section; belongs to the shikimate dehydrogenase family. Homodimer. Zn(2+) is required as a cofactor.

Its subcellular location is the cytoplasm. The enzyme catalyses 7-phospho-2-dehydro-3-deoxy-D-arabino-heptonate = 3-dehydroquinate + phosphate. It catalyses the reaction 3-dehydroquinate = 3-dehydroshikimate + H2O. The catalysed reaction is shikimate + NADP(+) = 3-dehydroshikimate + NADPH + H(+). It carries out the reaction shikimate + ATP = 3-phosphoshikimate + ADP + H(+). The enzyme catalyses 3-phosphoshikimate + phosphoenolpyruvate = 5-O-(1-carboxyvinyl)-3-phosphoshikimate + phosphate. It functions in the pathway metabolic intermediate biosynthesis; chorismate biosynthesis; chorismate from D-erythrose 4-phosphate and phosphoenolpyruvate: step 2/7. Its pathway is metabolic intermediate biosynthesis; chorismate biosynthesis; chorismate from D-erythrose 4-phosphate and phosphoenolpyruvate: step 3/7. The protein operates within metabolic intermediate biosynthesis; chorismate biosynthesis; chorismate from D-erythrose 4-phosphate and phosphoenolpyruvate: step 4/7. It participates in metabolic intermediate biosynthesis; chorismate biosynthesis; chorismate from D-erythrose 4-phosphate and phosphoenolpyruvate: step 5/7. It functions in the pathway metabolic intermediate biosynthesis; chorismate biosynthesis; chorismate from D-erythrose 4-phosphate and phosphoenolpyruvate: step 6/7. Its function is as follows. The AROM polypeptide catalyzes 5 consecutive enzymatic reactions in prechorismate polyaromatic amino acid biosynthesis. The chain is Pentafunctional AROM polypeptide from Saccharomyces cerevisiae (strain ATCC 204508 / S288c) (Baker's yeast).